The chain runs to 602 residues: ATP-dependent zinc metalloprotease FtsH 3 (602 aa).

Residues 1–18 (MNSWFLQVSKRLGPAGRR) lie on the Cytoplasmic side of the membrane. The helical transmembrane segment at 19–39 (LWLLGFMGVVLAVTLGLALRA) threads the bilayer. Topologically, residues 40–117 (ARESATQRTA…DFASREDPSR (78 aa)) are periplasmic. The helical transmembrane segment at 118–138 (AASAVLPVVVLAAVGFALFTV) threads the bilayer. At 139 to 602 (SRRRSPKVFS…RRPRPEDQAA (464 aa)) the chain is on the cytoplasmic side. 202-209 (GEPGTGKT) contributes to the ATP binding site. His425 contributes to the Zn(2+) binding site. Residue Glu426 is part of the active site. Zn(2+) is bound by residues His429 and Asp501.

The protein in the central section; belongs to the AAA ATPase family. It in the C-terminal section; belongs to the peptidase M41 family. As to quaternary structure, homohexamer. Requires Zn(2+) as cofactor.

The protein localises to the cell inner membrane. Its function is as follows. Acts as a processive, ATP-dependent zinc metallopeptidase for both cytoplasmic and membrane proteins. Plays a role in the quality control of integral membrane proteins. This chain is ATP-dependent zinc metalloprotease FtsH 3, found in Sorangium cellulosum (strain So ce56) (Polyangium cellulosum (strain So ce56)).